Consider the following 360-residue polypeptide: Uroporphyrinogen decarboxylase (360 aa).

Residues 27 to 31 (RQSGR), Phe46, Asp77, Tyr154, Thr209, and His327 contribute to the substrate site.

It belongs to the uroporphyrinogen decarboxylase family. As to quaternary structure, homodimer.

The protein localises to the cytoplasm. It catalyses the reaction uroporphyrinogen III + 4 H(+) = coproporphyrinogen III + 4 CO2. The protein operates within porphyrin-containing compound metabolism; protoporphyrin-IX biosynthesis; coproporphyrinogen-III from 5-aminolevulinate: step 4/4. Its function is as follows. Catalyzes the decarboxylation of four acetate groups of uroporphyrinogen-III to yield coproporphyrinogen-III. This Wigglesworthia glossinidia brevipalpis protein is Uroporphyrinogen decarboxylase.